Consider the following 568-residue polypeptide: Protein disconnected (568 aa).

A disordered region spans residues 16–77 (GHGPHSHQHV…PRRWGSPPIN (62 aa)). The segment covering 19 to 29 (PHSHQHVHSHL) has biased composition (basic residues). Over residues 30 to 45 (PSHPQPNAASPASSPG) the composition is skewed to low complexity. A compositionally biased stretch (gly residues) spans 46-62 (GSSGSGSGSAAGSGTGS). 2 C2H2-type zinc fingers span residues 92–115 (VQCSICFKTFCDKGALKIHFSAVH) and 120–145 (HKCTVEGCNMVFSSRRSRNRHSANPN). 4 disordered regions span residues 134 to 157 (RRSRNRHSANPNPKLHSPHIRRKI), 220 to 364 (LLST…SDAF), 391 to 419 (SSASSSSASASANPPQTSIKMDLDPDSDS), and 501 to 568 (QQYN…PISV). The span at 235 to 246 (NEQDADPEDDND) shows a compositional bias: acidic residues. Positions 253 to 263 (QANSSSPAASS) are enriched in polar residues. Low complexity predominate over residues 282-292 (SLSLASSSSIA). Residues 313–360 (SEQDREQEQEQEQEREREAEKEQEQDVESDKEHEPEQEHELEREKRSP) show a composition bias toward basic and acidic residues. Low complexity predominate over residues 391 to 402 (SSASSSSASASA). Residues 520-550 (HLTLSHHHQEQHHHLGHHHMGHHHHHHHQHH) are compositionally biased toward basic residues. Residues 558-568 (SPAATNAPISV) are compositionally biased toward polar residues.

In terms of tissue distribution, expressed at low levels in the adult head and very low, but detectable, levels in the body.

It is found in the nucleus. Required for the establishment of stable connections between the larval optic nerves, the Bolwig's nerves, and their target cells in the brain during embryonic development. The chain is Protein disconnected (disco) from Drosophila melanogaster (Fruit fly).